The chain runs to 281 residues: Urease accessory protein UreD (281 aa).

This sequence belongs to the UreD family. In terms of assembly, ureD, UreF and UreG form a complex that acts as a GTP-hydrolysis-dependent molecular chaperone, activating the urease apoprotein by helping to assemble the nickel containing metallocenter of UreC. The UreE protein probably delivers the nickel.

It localises to the cytoplasm. Required for maturation of urease via the functional incorporation of the urease nickel metallocenter. The protein is Urease accessory protein UreD of Pseudomonas savastanoi pv. phaseolicola (strain 1448A / Race 6) (Pseudomonas syringae pv. phaseolicola (strain 1448A / Race 6)).